The following is a 734-amino-acid chain: Photosystem I P700 chlorophyll a apoprotein A2 (734 aa).

The next 8 membrane-spanning stretches (helical) occupy residues 46–69, 135–158, 175–199, 273–291, 330–353, 369–395, 417–439, and 517–535; these read IFAS…FHVA, LYTG…LHLQ, LNHH…HVAI, MAHH…GHMY, IHFQ…QHMY, AALY…IFFI, AIIS…LYVH, and FLVH…LILV. Cys559 and Cys568 together coordinate [4Fe-4S] cluster. 2 helical membrane-spanning segments follow: residues 575-596 and 643-665; these read AFYL…YWHW and LSVW…MFLI. Residues His654, Met662, and Tyr670 each coordinate chlorophyll a. Trp671 is a binding site for phylloquinone. The chain crosses the membrane as a helical span at residues 707–727; the sequence is LVGLAHFSVGYIFTYAAFLIA.

It belongs to the PsaA/PsaB family. In terms of assembly, the PsaA/B heterodimer binds the P700 chlorophyll special pair and subsequent electron acceptors. PSI consists of a core antenna complex that captures photons, and an electron transfer chain that converts photonic excitation into a charge separation. The eukaryotic PSI reaction center is composed of at least 11 subunits. Requires P700 is a chlorophyll a/chlorophyll a' dimer, A0 is one or more chlorophyll a, A1 is one or both phylloquinones and FX is a shared 4Fe-4S iron-sulfur center. as cofactor.

The protein resides in the plastid. The protein localises to the chloroplast thylakoid membrane. The enzyme catalyses reduced [plastocyanin] + hnu + oxidized [2Fe-2S]-[ferredoxin] = oxidized [plastocyanin] + reduced [2Fe-2S]-[ferredoxin]. Functionally, psaA and PsaB bind P700, the primary electron donor of photosystem I (PSI), as well as the electron acceptors A0, A1 and FX. PSI is a plastocyanin-ferredoxin oxidoreductase, converting photonic excitation into a charge separation, which transfers an electron from the donor P700 chlorophyll pair to the spectroscopically characterized acceptors A0, A1, FX, FA and FB in turn. Oxidized P700 is reduced on the lumenal side of the thylakoid membrane by plastocyanin. This Hordeum vulgare (Barley) protein is Photosystem I P700 chlorophyll a apoprotein A2.